The following is a 167-amino-acid chain: Transmembrane protein 229B (167 aa).

Over Met1 to Tyr14 the chain is Cytoplasmic. The chain crosses the membrane as a helical span at residues Leu15 to Val35. The Extracellular portion of the chain corresponds to Asn36–Lys40. A helical transmembrane segment spans residues Phe41–Glu61. The Cytoplasmic segment spans residues Arg62–Leu73. A helical transmembrane segment spans residues Leu74–Ile94. The Extracellular segment spans residues Leu95–Asp109. The helical transmembrane segment at Phe110 to Ile130 threads the bilayer. Residues Met131–Asp167 lie on the Cytoplasmic side of the membrane. The disordered stretch occupies residues Ala148–Asp167.

The protein belongs to the TMEM229 family.

Its subcellular location is the membrane. The chain is Transmembrane protein 229B (TMEM229B) from Mus musculus (Mouse).